The chain runs to 221 residues: Casparian strip membrane protein 3 (221 aa).

The span at 1–12 (MDIEKAASRREE) shows a compositional bias: basic and acidic residues. Residues 1-28 (MDIEKAASRREEEEPIVQRPKLDKGKGK) are disordered. The Cytoplasmic portion of the chain corresponds to 1 to 58 (MDIEKAASRREEEEPIVQRPKLDKGKGKAHVFAPPMNYNRIMDKHKQEKVSAAGWKRG). Residues 59–79 (VAIFDFVLRLIAAITAMAAAA) form a helical membrane-spanning segment. The Extracellular portion of the chain corresponds to 80–109 (KMATTEETLPFFTQFLQFQAEYTDLPTMSS). The helical transmembrane segment at 110 to 130 (FVIVNSIVGGYLTLSLPFSIV) threads the bilayer. Topologically, residues 131–148 (CILRPLAVPPRLFLIICD) are cytoplasmic. The chain crosses the membrane as a helical span at residues 149 to 169 (TAMMGLTMMAASASAAIVYLA). Residues 170–194 (HNGNSSSNWLPVCQQFGDFCQGTSG) lie on the Extracellular side of the membrane. N-linked (GlcNAc...) asparagine glycosylation is present at N173. The helical transmembrane segment at 195–215 (AVVASFIAATLLMFLVILSAF) threads the bilayer. Residues 216 to 221 (ALKRST) lie on the Cytoplasmic side of the membrane.

The protein belongs to the Casparian strip membrane proteins (CASP) family. In terms of assembly, homodimer and heterodimers.

It is found in the cell membrane. Regulates membrane-cell wall junctions and localized cell wall deposition. Required for establishment of the Casparian strip membrane domain (CSD) and the subsequent formation of Casparian strips, a cell wall modification of the root endodermis that determines an apoplastic barrier between the intraorganismal apoplasm and the extraorganismal apoplasm and prevents lateral diffusion. The polypeptide is Casparian strip membrane protein 3 (Arabidopsis lyrata subsp. lyrata (Lyre-leaved rock-cress)).